The chain runs to 43 residues: Potassium channel toxin gamma-KTx 4.12 (43 aa).

4 disulfide bridges follow: Cys5-Cys23, Cys11-Cys34, Cys20-Cys39, and Cys24-Cys41.

Expressed by the venom gland.

It is found in the secreted. Functionally, reversibly blocks Kv11/ERG potassium channels. Is less toxic than ergtoxin (AC Q86QT3). The sequence is that of Potassium channel toxin gamma-KTx 4.12 from Centruroides sculpturatus (Arizona bark scorpion).